A 246-amino-acid chain; its full sequence is 14-3-3 protein eta (246 aa).

Glycine 2 carries the post-translational modification N-acetylglycine. Serine 25 and serine 59 each carry phosphoserine.

Belongs to the 14-3-3 family. Homodimer. Interacts with many nuclear hormone receptors and cofactors including AR, ESR1, ESR2, MC2R, NR3C1, NRIP1, PPARBP and THRA. Interacts with ABL1 (phosphorylated form); the interaction retains it in the cytoplasm. Weakly interacts with CDKN1B. Interacts with ARHGEF28 and CDK16. Interacts with GAB2. Interacts with KCNK18 in a phosphorylation-dependent manner. Interacts with SAMSN1. Interacts with the 'Ser-241' phosphorylated form of PDPK1. Interacts with the 'Thr-369' phosphorylated form of DAPK2. Interacts with PI4KB, TBC1D22A and TBC1D22B. Interacts with SLITRK1. Interacts with MEFV. In terms of processing, phosphorylated on Ser-59 by protein kinase C delta type catalytic subunit in a sphingosine-dependent fashion.

It localises to the cytoplasm. In terms of biological role, adapter protein implicated in the regulation of a large spectrum of both general and specialized signaling pathways. Binds to a large number of partners, usually by recognition of a phosphoserine or phosphothreonine motif. Binding generally results in the modulation of the activity of the binding partner. Negatively regulates the kinase activity of PDPK1. The polypeptide is 14-3-3 protein eta (YWHAH) (Bos taurus (Bovine)).